Reading from the N-terminus, the 208-residue chain is Component of Sp100-rs (208 aa).

Residues 6–121 (GSPRMSTEQE…LRRSFECGAK (116 aa)) form the HSR domain.

The polypeptide is Component of Sp100-rs (Csprs) (Mus musculus (Mouse)).